A 260-amino-acid polypeptide reads, in one-letter code: Scytalidopepsin B (260 aa).

The signal sequence occupies residues 1-20 (MKFTTAAVLSALVSAEIAFA). Residues 21 to 54 (APGGNGFARRQARRQARAAGLKASPFRQVNAKEA) constitute a propeptide that is removed on maturation. Cys101 and Cys181 are disulfide-bonded. The active-site Proton acceptor is the Glu190. 2 disulfides stabilise this stretch: Cys195–Cys219 and Cys248–Cys257.

This sequence belongs to the peptidase G1 family. Monomer.

It catalyses the reaction Hydrolysis of proteins with broad specificity, cleaving 24-Phe-|-Phe-25, but not 15-Leu-|-Tyr-16 and 25-Phe-|-Tyr-26 in the B chain of insulin.. The chain is Scytalidopepsin B from Scytalidium lignicola (Hyphomycete).